A 208-amino-acid chain; its full sequence is MNSLSTIAFSLGLLLVTATAFPTPGPLGEDFKDDTTSDRLLLTSPDKTEALIKYILGKISAMRKEMCEKYDKCENSKEALAENNLNLPKMAEKDGCFQSGFNQETCLMRITTGLLEYQIYLDYLQNEYEGDKGSIEAVQISIKALAQILRQKVKNPDEVTTPDPTTNASLMNNLQSQNDDWMRNTKIILILRSLENFLQFSLRAVRIK.

An N-terminal signal peptide occupies residues 1–20; sequence MNSLSTIAFSLGLLLVTATA. The cysteines at positions 67 and 73 are disulfide-linked. A Phosphoserine modification is found at serine 76. A disulfide bridge connects residues cysteine 96 and cysteine 106. The N-linked (GlcNAc...) asparagine glycan is linked to asparagine 167.

Belongs to the IL-6 superfamily. Component of a hexamer of two molecules each of IL6, IL6R and IL6ST; first binds to IL6R to associate with the signaling subunit IL6ST. Interacts with IL6R (via the N-terminal ectodomain); this interaction may be affected by IL6R-binding with SORL1, hence decreasing IL6 cis signaling. Interacts with SORL1 (via the N-terminal ectodomain); this interaction leads to IL6 internalization and lysosomal degradation. May form a trimeric complex with the soluble SORL1 ectodomain and soluble IL6R receptor; this interaction might stabilize circulating IL6, hence promoting IL6 trans signaling.

The protein localises to the secreted. Functionally, cytokine with a wide variety of biological functions in immunity, tissue regeneration, and metabolism. Binds to IL6R, then the complex associates to the signaling subunit IL6ST/gp130 to trigger the intracellular IL6-signaling pathway. The interaction with the membrane-bound IL6R and IL6ST stimulates 'classic signaling', whereas the binding of IL6 and soluble IL6R to IL6ST stimulates 'trans-signaling'. Alternatively, 'cluster signaling' occurs when membrane-bound IL6:IL6R complexes on transmitter cells activate IL6ST receptors on neighboring receiver cells. IL6 is a potent inducer of the acute phase response. Rapid production of IL6 contributes to host defense during infection and tissue injury, but excessive IL6 synthesis is involved in disease pathology. In the innate immune response, is synthesized by myeloid cells, such as macrophages and dendritic cells, upon recognition of pathogens through toll-like receptors (TLRs) at the site of infection or tissue injury. In the adaptive immune response, is required for the differentiation of B cells into immunoglobulin-secreting cells. Plays a major role in the differentiation of CD4(+) T cell subsets. Essential factor for the development of T follicular helper (Tfh) cells that are required for the induction of germinal-center formation. Required to drive naive CD4(+) T cells to the Th17 lineage. Also required for proliferation of myeloma cells and the survival of plasmablast cells. Its function is as follows. Acts as an essential factor in bone homeostasis and on vessels directly or indirectly by induction of VEGF, resulting in increased angiogenesis activity and vascular permeability. Induces, through 'trans-signaling' and synergistically with IL1B and TNF, the production of VEGF. Involved in metabolic controls, is discharged into the bloodstream after muscle contraction increasing lipolysis and improving insulin resistance. 'Trans-signaling' in central nervous system also regulates energy and glucose homeostasis. Mediates, through GLP-1, crosstalk between insulin-sensitive tissues, intestinal L cells and pancreatic islets to adapt to changes in insulin demand. Also acts as a myokine. Plays a protective role during liver injury, being required for maintenance of tissue regeneration. Also has a pivotal role in iron metabolism by regulating HAMP/hepcidin expression upon inflammation or bacterial infection. Through activation of IL6ST-YAP-NOTCH pathway, induces inflammation-induced epithelial regeneration. The sequence is that of Interleukin-6 (IL6) from Delphinapterus leucas (Beluga whale).